Reading from the N-terminus, the 101-residue chain is Phosphoribosyl-AMP cyclohydrolase (101 aa).

Residue aspartate 71 participates in Mg(2+) binding. Cysteine 72 is a Zn(2+) binding site. Residues aspartate 73 and aspartate 75 each contribute to the Mg(2+) site. The Zn(2+) site is built by cysteine 88 and cysteine 95.

It belongs to the PRA-CH family. In terms of assembly, homodimer. It depends on Mg(2+) as a cofactor. Zn(2+) is required as a cofactor.

The protein localises to the cytoplasm. The enzyme catalyses 1-(5-phospho-beta-D-ribosyl)-5'-AMP + H2O = 1-(5-phospho-beta-D-ribosyl)-5-[(5-phospho-beta-D-ribosylamino)methylideneamino]imidazole-4-carboxamide. Its pathway is amino-acid biosynthesis; L-histidine biosynthesis; L-histidine from 5-phospho-alpha-D-ribose 1-diphosphate: step 3/9. Catalyzes the hydrolysis of the adenine ring of phosphoribosyl-AMP. The sequence is that of Phosphoribosyl-AMP cyclohydrolase from Bacillus cereus (strain AH187).